We begin with the raw amino-acid sequence, 208 residues long: MKKFIFCFLCLWTLNIFAASKTYPNKLNRCKITRNIFNDYEPKVFETTNNLLRKTGRLSKFYGERILIKGKILDQNCVPVADAKVYLWQVGSGGKYPYEPLKTRVDKRRFTSKSDSSFTGSGIATTNNKGEYYFISMLPYKSSRYLRSANIRIEHPSLTTLETRLDLSDKNMCDNECGEVNPILIEPQENMPSYCFDLVLQGTTLKRY.

The protein belongs to the intradiol ring-cleavage dioxygenase family.

The sequence is that of Putative dioxygenase RF_0617 from Rickettsia felis (strain ATCC VR-1525 / URRWXCal2) (Rickettsia azadi).